The following is a 473-amino-acid chain: Photosystem II CP43 reaction center protein (473 aa).

The propeptide occupies 1–14 (MKTLYSLRRFYPVE). At threonine 15 the chain carries N-acetylthreonine. A Phosphothreonine modification is found at threonine 15. The next 5 helical transmembrane spans lie at 69–93 (LFEVAHFVPEKPMYEQGLILLPHLA), 134–155 (LLGPETLEESFPFFGYVWKDRN), 178–200 (KALYFGGVYDTWAPGGGDVRKIT), 255–275 (KPFAWARRALVWSGEAYLSYS), and 291–312 (WFNNTAYPSEFYGPTGPEASQA). Glutamate 367 is a [CaMn4O5] cluster binding site. The helical transmembrane segment at 447–471 (RARAAAAGFEKGIDRDFEPVLFMTP) threads the bilayer.

This sequence belongs to the PsbB/PsbC family. PsbC subfamily. In terms of assembly, PSII is composed of 1 copy each of membrane proteins PsbA, PsbB, PsbC, PsbD, PsbE, PsbF, PsbH, PsbI, PsbJ, PsbK, PsbL, PsbM, PsbT, PsbX, PsbY, PsbZ, Psb30/Ycf12, at least 3 peripheral proteins of the oxygen-evolving complex and a large number of cofactors. It forms dimeric complexes. Binds multiple chlorophylls and provides some of the ligands for the Ca-4Mn-5O cluster of the oxygen-evolving complex. It may also provide a ligand for a Cl- that is required for oxygen evolution. PSII binds additional chlorophylls, carotenoids and specific lipids. is required as a cofactor.

Its subcellular location is the plastid. It localises to the chloroplast thylakoid membrane. Functionally, one of the components of the core complex of photosystem II (PSII). It binds chlorophyll and helps catalyze the primary light-induced photochemical processes of PSII. PSII is a light-driven water:plastoquinone oxidoreductase, using light energy to abstract electrons from H(2)O, generating O(2) and a proton gradient subsequently used for ATP formation. The chain is Photosystem II CP43 reaction center protein from Cucumis sativus (Cucumber).